The sequence spans 10746 residues: Extracellular matrix-binding protein ebh (10746 aa).

Positions M1 to A39 are cleaved as a signal peptide. 2 stretches are compositionally biased toward polar residues: residues E41–Q59 and V67–E113. Disordered stretches follow at residues E41–Q174, M246–V274, and I1340–R1372. A compositionally biased stretch (low complexity) spans A120–A130. Residues S132–E158 show a composition bias toward basic and acidic residues. Residues V162–V173 show a composition bias toward polar residues. A compositionally biased stretch (low complexity) spans Q248–S263. Residues Y1356–R1372 show a composition bias toward polar residues. 59 FIVAR domains span residues A2520 to A2576, S2606 to E2662, D2683 to A2746, A2776 to K2832, A2860 to N2915, A2943 to N2998, A3026 to K3081, A3150 to K3208, A3276 to A3335, A3403 to A3461, A3529 to A3587, A3655 to K3713, A3781 to A3839, A3907 to A3965, A4033 to A4091, A4159 to A4217, Q4285 to A4343, A4411 to A4469, A4537 to I4595, A4663 to A4721, A4789 to A4847, A4915 to M4973, A5041 to A5099, A5167 to A5225, A5293 to A5351, A5419 to A5477, A5545 to A5603, A5671 to A5729, A5797 to A5855, A5923 to A5981, A6049 to K6107, A6175 to A6232, A6300 to A6358, A6426 to A6484, A6552 to A6610, A6678 to A6736, A6804 to A6862, A6930 to A6988, A7056 to A7114, A7182 to A7240, A7308 to A7366, A7434 to A7492, A7560 to A7618, A7686 to A7744, A7812 to A7870, A7938 to A7996, A8064 to E8125, A8190 to E8251, A8316 to A8374, A8442 to A8500, A8568 to A8625, L8693 to A8751, A8819 to A8877, A8945 to L9003, A9071 to L9129, A9197 to A9255, S9323 to A9377, V9445 to L9504, and A9699 to A9755. Residues D7066 to S7080 are compositionally biased toward polar residues. The interval D7066 to D7085 is disordered. Over residues D10492–H10507 the composition is skewed to polar residues. Positions D10492–L10530 are disordered. Residues I10552–I10572 form a helical membrane-spanning segment. The disordered stretch occupies residues R10649–K10746. Residues T10664–H10674 show a composition bias toward basic and acidic residues. The span at K10719–K10746 shows a compositional bias: basic residues.

It localises to the cell membrane. The protein is Extracellular matrix-binding protein ebh (ebh) of Staphylococcus aureus (strain MRSA252).